The following is a 172-amino-acid chain: Adenine phosphoribosyltransferase (172 aa).

It belongs to the purine/pyrimidine phosphoribosyltransferase family. In terms of assembly, homodimer.

It localises to the cytoplasm. It carries out the reaction AMP + diphosphate = 5-phospho-alpha-D-ribose 1-diphosphate + adenine. Its pathway is purine metabolism; AMP biosynthesis via salvage pathway; AMP from adenine: step 1/1. Functionally, catalyzes a salvage reaction resulting in the formation of AMP, that is energically less costly than de novo synthesis. The protein is Adenine phosphoribosyltransferase of Clostridium botulinum (strain Eklund 17B / Type B).